Reading from the N-terminus, the 255-residue chain is Pyrroloquinoline-quinone synthase (255 aa).

It belongs to the PqqC family.

The catalysed reaction is 6-(2-amino-2-carboxyethyl)-7,8-dioxo-1,2,3,4,7,8-hexahydroquinoline-2,4-dicarboxylate + 3 O2 = pyrroloquinoline quinone + 2 H2O2 + 2 H2O + H(+). It functions in the pathway cofactor biosynthesis; pyrroloquinoline quinone biosynthesis. Functionally, ring cyclization and eight-electron oxidation of 3a-(2-amino-2-carboxyethyl)-4,5-dioxo-4,5,6,7,8,9-hexahydroquinoline-7,9-dicarboxylic-acid to PQQ. This chain is Pyrroloquinoline-quinone synthase, found in Granulibacter bethesdensis (strain ATCC BAA-1260 / CGDNIH1).